The sequence spans 115 residues: NADH-ubiquinone oxidoreductase chain 3 (115 aa).

The next 3 helical transmembrane spans lie at 3–23 (LMLTLLTNTLLASLLVLIAFW), 55–75 (FFLVAITFLLFDLEIALLLPL), and 84–104 (LNTMLIMALVLISLLAISLAY).

The protein belongs to the complex I subunit 3 family. In terms of assembly, core subunit of respiratory chain NADH dehydrogenase (Complex I) which is composed of 45 different subunits. Interacts with TMEM186. Interacts with TMEM242.

It is found in the mitochondrion inner membrane. It catalyses the reaction a ubiquinone + NADH + 5 H(+)(in) = a ubiquinol + NAD(+) + 4 H(+)(out). Core subunit of the mitochondrial membrane respiratory chain NADH dehydrogenase (Complex I) which catalyzes electron transfer from NADH through the respiratory chain, using ubiquinone as an electron acceptor. Essential for the catalytic activity of complex I. This chain is NADH-ubiquinone oxidoreductase chain 3, found in Equus caballus (Horse).